The sequence spans 212 residues: MKLPMPIAIQTTQPDVSFQSHSVSRSELAASTHPTRLAARLDPELSAATVVQLQKCARLQPRLAELLLGNDMDWNRIGWGPDLLRGHDPRRAALLAGSIWHARSLLKVVSQRDLARLVERIGADAHAFGIRHLAHAIADKLISDPEKLALQIEHDGHACLGAWLNIRPALERNRVLLRLPLGTAAENPAPEHDGASSGLFSLVIAHFEMESP.

The protein is Nodulation protein NolU (nolU) of Sinorhizobium fredii (strain NBRC 101917 / NGR234).